Consider the following 49-residue polypeptide: Large ribosomal subunit protein uL16 (49 aa).

The protein belongs to the universal ribosomal protein uL16 family. In terms of assembly, part of the 50S ribosomal subunit.

Functionally, binds 23S rRNA and is also seen to make contacts with the A and possibly P site tRNAs. This chain is Large ribosomal subunit protein uL16 (rplP), found in Aquifex pyrophilus.